Reading from the N-terminus, the 474-residue chain is Gamma-aminobutyric acid receptor subunit beta-1 (474 aa).

A signal peptide spans 1 to 25 (MWTVQNRESLGLLSFPVMVAMVCCA). Residues 26–245 (HSSNEPSNMS…SFRLKRNIGY (220 aa)) lie on the Extracellular side of the membrane. 2 N-linked (GlcNAc...) asparagine glycosylation sites follow: N33 and N105. Residue Y122 coordinates histamine. C161 and C175 are oxidised to a cystine. The N-linked (GlcNAc...) asparagine glycan is linked to N174. Histamine is bound by residues 181-182 (SY) and T227. 4-aminobutanoate contacts are provided by Y182 and T227. 3 helical membrane-spanning segments follow: residues 246–267 (FILQ…SFWI), 271–293 (ASAA…STHL), and 305–327 (AIDI…YAFV). The Cytoplasmic segment spans residues 328 to 451 (NYIFFGKGPQ…DLTDVNSIDK (124 aa)). Residues 452–473 (WSRMFFPITFSLFNVVYWLYYV) form a helical membrane-spanning segment.

The protein belongs to the ligand-gated ion channel (TC 1.A.9) family. Gamma-aminobutyric acid receptor (TC 1.A.9.5) subfamily. GABRB1 sub-subfamily. As to quaternary structure, heteropentamer, formed by a combination of alpha (GABRA1-6), beta (GABRB1-3), gamma (GABRG1-3), delta (GABRD), epsilon (GABRE), rho (GABRR1-3), pi (GABRP) and theta (GABRQ) chains, each subunit exhibiting distinct physiological and pharmacological properties. Binds UBQLN1.

It localises to the postsynaptic cell membrane. The protein localises to the cell membrane. The catalysed reaction is chloride(in) = chloride(out). Potentiated by histamine. Functionally, beta subunit of the heteropentameric ligand-gated chloride channel gated by gamma-aminobutyric acid (GABA), a major inhibitory neurotransmitter in the brain. GABA-gated chloride channels, also named GABA(A) receptors (GABAAR), consist of five subunits arranged around a central pore and contain GABA active binding site(s) located at the alpha and beta subunit interface(s). When activated by GABA, GABAARs selectively allow the flow of chloride anions across the cell membrane down their electrochemical gradient. Chloride influx into the postsynaptic neuron following GABAAR opening decreases the neuron ability to generate a new action potential, thereby reducing nerve transmission. Beta-containing GABAARs can simultaneously bind GABA and histamine where histamine binds at the interface of two neighboring beta subunits, which may be involved in the regulation of sleep and wakefulness. The protein is Gamma-aminobutyric acid receptor subunit beta-1 of Mus musculus (Mouse).